The sequence spans 185 residues: Small ribosomal subunit protein uS5 (185 aa).

The 64-residue stretch at 29–92 (LEEKVVKINR…EKAKKQLVRI (64 aa)) folds into the S5 DRBM domain.

It belongs to the universal ribosomal protein uS5 family. As to quaternary structure, part of the 30S ribosomal subunit. Contacts proteins S4 and S8.

Functionally, with S4 and S12 plays an important role in translational accuracy. Its function is as follows. Located at the back of the 30S subunit body where it stabilizes the conformation of the head with respect to the body. The protein is Small ribosomal subunit protein uS5 of Aster yellows witches'-broom phytoplasma (strain AYWB).